The chain runs to 756 residues: NUT family member 2F (756 aa).

Disordered regions lie at residues G173 to S200, I293 to P438, R511 to M639, and R653 to Q756. Over residues S304–P321 the composition is skewed to pro residues. Residues E417–Q427 show a composition bias toward basic and acidic residues. A compositionally biased stretch (polar residues) spans Q543–Q560. Residues L654–L665 show a composition bias toward low complexity. Residues S746–Q756 show a composition bias toward basic residues.

Belongs to the NUT family.

The sequence is that of NUT family member 2F (NUTM2F) from Homo sapiens (Human).